Here is a 224-residue protein sequence, read N- to C-terminus: LexA repressor (224 aa).

The segment at residues 31-51 (RAEIAAELGFKSANAAEEHLQ) is a DNA-binding region (H-T-H motif). Active-site for autocatalytic cleavage activity residues include S142 and K179.

It belongs to the peptidase S24 family. Homodimer.

It catalyses the reaction Hydrolysis of Ala-|-Gly bond in repressor LexA.. Functionally, represses a number of genes involved in the response to DNA damage (SOS response), including recA and lexA. In the presence of single-stranded DNA, RecA interacts with LexA causing an autocatalytic cleavage which disrupts the DNA-binding part of LexA, leading to derepression of the SOS regulon and eventually DNA repair. This chain is LexA repressor, found in Acidovorax ebreus (strain TPSY) (Diaphorobacter sp. (strain TPSY)).